Here is a 416-residue protein sequence, read N- to C-terminus: Lipoyl synthase, mitochondrial (416 aa).

Residues 1 to 33 (MAAASTNRLRLLYTSTRASLPQSTPSILTTRTY) constitute a mitochondrion transit peptide. The tract at residues 20 to 52 (LPQSTPSILTTRTYATTDSSTSATSTPKPRRRT) is disordered. Positions 29-46 (TTRTYATTDSSTSATSTP) are enriched in low complexity. [4Fe-4S] cluster contacts are provided by cysteine 133, cysteine 138, cysteine 144, cysteine 164, cysteine 168, cysteine 171, and serine 379. A Radical SAM core domain is found at 147–368 (GGDKAAATAT…QRRAEELGFL (222 aa)).

The protein belongs to the radical SAM superfamily. Lipoyl synthase family. [4Fe-4S] cluster is required as a cofactor.

The protein resides in the mitochondrion. It carries out the reaction [[Fe-S] cluster scaffold protein carrying a second [4Fe-4S](2+) cluster] + N(6)-octanoyl-L-lysyl-[protein] + 2 oxidized [2Fe-2S]-[ferredoxin] + 2 S-adenosyl-L-methionine + 4 H(+) = [[Fe-S] cluster scaffold protein] + N(6)-[(R)-dihydrolipoyl]-L-lysyl-[protein] + 4 Fe(3+) + 2 hydrogen sulfide + 2 5'-deoxyadenosine + 2 L-methionine + 2 reduced [2Fe-2S]-[ferredoxin]. The protein operates within protein modification; protein lipoylation via endogenous pathway; protein N(6)-(lipoyl)lysine from octanoyl-[acyl-carrier-protein]: step 2/2. Functionally, catalyzes the radical-mediated insertion of two sulfur atoms into the C-6 and C-8 positions of the octanoyl moiety bound to the lipoyl domains of lipoate-dependent enzymes, thereby converting the octanoylated domains into lipoylated derivatives. The protein is Lipoyl synthase, mitochondrial of Aspergillus niger (strain ATCC MYA-4892 / CBS 513.88 / FGSC A1513).